We begin with the raw amino-acid sequence, 392 residues long: Frizzled-9 (392 aa).

Residues 1 to 35 (ACDNPEKFQYVEKSLSCAPRCSPGVDVYWSREDKD) lie on the Extracellular side of the membrane. A helical membrane pass occupies residues 36-56 (FAFVWMAVWSTLCFVSTAFTV). The Cytoplasmic portion of the chain corresponds to 57-72 (LTFLLDPHRFQYPERP). Residues 73–93 (IIFLSMCYNVYSVAFIIRSVA) traverse the membrane as a helical segment. The Extracellular portion of the chain corresponds to 94–119 (GAETIACDRENGELYIIQEGLESTGC). The helical transmembrane segment at 120–140 (TIVFLILYYFGMASSLWWVVL) threads the bilayer. Topologically, residues 141–161 (TLTWFLAAGKKWGHEAIEAHS) are cytoplasmic. The chain crosses the membrane as a helical span at residues 162-182 (SYFHMAAWGIPAMKTIVILTM). Topologically, residues 183-206 (RKVAGDELTGLCYVGSMDVSALTG) are extracellular. A helical transmembrane segment spans residues 207-227 (FVLIPLSCYLVVGTSFILTGF). At 228–253 (VALFHIRKIMKTGGTNTEKLEKLMVK) the chain is on the cytoplasmic side. A helical transmembrane segment spans residues 254–274 (IGVFSILYTVPATCVIVCYFY). Residues 275 to 312 (ERLNVDYWNLRALERACVPLPGRRAADCSLEASVPTVA) lie on the Extracellular side of the membrane. A helical membrane pass occupies residues 313–333 (VFMLKIFMSLVVGITSGVWVW). Residues 334 to 392 (SSKTLQTWQSLCNRKLGVRTRGKPCSGVSCGGVHCHYKAPTVMLHMTKTDPYLDNPTHV) are Cytoplasmic-facing. Positions 336-341 (KTLQTW) match the Lys-Thr-X-X-X-Trp motif, mediates interaction with the PDZ domain of Dvl family members motif. Residues 390–392 (THV) carry the PDZ-binding motif.

It belongs to the G-protein coupled receptor Fz/Smo family.

It is found in the cell membrane. Receptor for WNT2 that is coupled to the beta-catenin canonical signaling pathway, which leads to the activation of disheveled proteins, inhibition of GSK-3 kinase, nuclear accumulation of beta-catenin and activation of Wnt target genes. This chain is Frizzled-9 (FZD9), found in Gallus gallus (Chicken).